The primary structure comprises 183 residues: Ribulose bisphosphate carboxylase small subunit, chloroplastic 1 (183 aa).

A chloroplast-targeting transit peptide spans 1–58 (MASSMLSNAAMATTAATAGAQASMVAPFNGLKSFATFPITKKSSNDFSSLPSNGGRVQ).

It belongs to the RuBisCO small chain family. Heterohexadecamer of 8 large and 8 small subunits.

It is found in the plastid. Its subcellular location is the chloroplast. RuBisCO catalyzes two reactions: the carboxylation of D-ribulose 1,5-bisphosphate, the primary event in carbon dioxide fixation, as well as the oxidative fragmentation of the pentose substrate. Both reactions occur simultaneously and in competition at the same active site. Although the small subunit is not catalytic it is essential for maximal activity. This chain is Ribulose bisphosphate carboxylase small subunit, chloroplastic 1, found in Amaranthus hypochondriacus (Prince-of-Wales feather).